The following is a 437-amino-acid chain: Epsilon-sarcoglycan (437 aa).

Residues 1–317 (MLLFWWWELG…LKSRDYYTDF (317 aa)) are Extracellular-facing. A glycan (N-linked (GlcNAc...) asparagine) is linked at asparagine 200. A helical membrane pass occupies residues 318-338 (LVTLAVPSAVALVLFLILAYI). Residues 339-437 (MCCRREGVEK…QPQTTGKWYP (99 aa)) are Cytoplasmic-facing.

Belongs to the sarcoglycan alpha/epsilon family. N-glycosylated. Post-translationally, ubiquitinated, leading to its degradation by the proteasome. Identified in all tissues tested. Expression highest in lung and placenta, moderate in brain, heart and skeletal muscle, low in kidney and liver. Also detected in embryo.

It localises to the cell membrane. It is found in the sarcolemma. The protein localises to the golgi apparatus. The protein resides in the cell projection. Its subcellular location is the dendrite. It localises to the cytoplasm. It is found in the cytoskeleton. Functionally, component of the sarcoglycan complex, a subcomplex of the dystrophin-glycoprotein complex which forms a link between the F-actin cytoskeleton and the extracellular matrix. The sequence is that of Epsilon-sarcoglycan (Sgce) from Mus musculus (Mouse).